The sequence spans 309 residues: Homoserine kinase (309 aa).

91-101 (PVGSGLGSSAC) contributes to the ATP binding site.

It belongs to the GHMP kinase family. Homoserine kinase subfamily.

Its subcellular location is the cytoplasm. It catalyses the reaction L-homoserine + ATP = O-phospho-L-homoserine + ADP + H(+). It participates in amino-acid biosynthesis; L-threonine biosynthesis; L-threonine from L-aspartate: step 4/5. Its function is as follows. Catalyzes the ATP-dependent phosphorylation of L-homoserine to L-homoserine phosphate. The chain is Homoserine kinase from Hamiltonella defensa subsp. Acyrthosiphon pisum (strain 5AT).